The sequence spans 145 residues: D-aminoacyl-tRNA deacylase (145 aa).

The Gly-cisPro motif, important for rejection of L-amino acids motif lies at 137-138 (GP).

This sequence belongs to the DTD family. In terms of assembly, homodimer.

It is found in the cytoplasm. It carries out the reaction glycyl-tRNA(Ala) + H2O = tRNA(Ala) + glycine + H(+). The enzyme catalyses a D-aminoacyl-tRNA + H2O = a tRNA + a D-alpha-amino acid + H(+). An aminoacyl-tRNA editing enzyme that deacylates mischarged D-aminoacyl-tRNAs. Also deacylates mischarged glycyl-tRNA(Ala), protecting cells against glycine mischarging by AlaRS. Acts via tRNA-based rather than protein-based catalysis; rejects L-amino acids rather than detecting D-amino acids in the active site. By recycling D-aminoacyl-tRNA to D-amino acids and free tRNA molecules, this enzyme counteracts the toxicity associated with the formation of D-aminoacyl-tRNA entities in vivo and helps enforce protein L-homochirality. This Photorhabdus laumondii subsp. laumondii (strain DSM 15139 / CIP 105565 / TT01) (Photorhabdus luminescens subsp. laumondii) protein is D-aminoacyl-tRNA deacylase.